Here is a 569-residue protein sequence, read N- to C-terminus: RNA demethylase ALKBH10B (569 aa).

A coiled-coil region spans residues 118-151 (QKVAAKKAEDLKQKKTEEEAEEDLKEVVATEEEE). A disordered region spans residues 164 to 190 (ENDVNGDVEDVEDDSPTSDITDSGSHQ). A compositionally biased stretch (acidic residues) spans 167–179 (VNGDVEDVEDDSP). Over residues 180 to 189 (TSDITDSGSH) the composition is skewed to polar residues. Fe cation-binding residues include H366, E368, and H421. R430 serves as a coordination point for 2-oxoglutarate. The span at 531-545 (KHVKHLPPRAQKKRL) shows a compositional bias: basic residues. The interval 531-569 (KHVKHLPPRAQKKRLLPLPPAASSSPAGGSTSEPVITVG) is disordered. Residues 551-560 (AASSSPAGGS) are compositionally biased toward low complexity.

It belongs to the alkB family. The cofactor is Fe(2+).

It carries out the reaction an N(6)-methyladenosine in mRNA + 2-oxoglutarate + O2 = an adenosine in mRNA + formaldehyde + succinate + CO2. Dioxygenase that demethylates RNA by oxidative demethylation: specifically demethylates N(6)-methyladenosine (m6A) RNA, the most prevalent internal modification of messenger RNA (mRNA) in higher eukaryotes. ALKBH10B-mediated mRNA m6A demethylation stabilizes the mRNA of the key flowering time regulators FT, SPL3 and SPL9, which are involved in the control of floral transition. The sequence is that of RNA demethylase ALKBH10B from Arabidopsis thaliana (Mouse-ear cress).